The sequence spans 84 residues: MKLTCVMIVAVLFLTTWTFVTADDSRYGLKNLFPKARHEMKNPEASKLNKRDGCYNAGTFCGIRPGLCCSEFCFLWCITFVDSG.

The first 22 residues, Met1–Ala22, serve as a signal peptide directing secretion. Residues Asp23–Asn49 constitute a propeptide that is removed on maturation. Cystine bridges form between Cys54-Cys69, Cys61-Cys73, and Cys68-Cys77. Pro65 carries the 4-hydroxyproline modification. Ser83 is subject to Serine amide.

The protein belongs to the conotoxin O1 superfamily. As to expression, expressed by the venom duct.

The protein resides in the secreted. Its function is as follows. Delta-conotoxins bind to site 6 of voltage-gated sodium channels (Nav) and inhibit the inactivation process. This is Delta-conotoxin-like MVIA from Conus magus (Magical cone).